Reading from the N-terminus, the 37-residue chain is MRVQASVKRICRNCKIIRRKGVVRVICTDPRHKQRQG.

This sequence belongs to the bacterial ribosomal protein bL36 family.

This Azoarcus sp. (strain BH72) protein is Large ribosomal subunit protein bL36.